The chain runs to 359 residues: Large ribosomal subunit protein bL27m (359 aa).

The transit peptide at 1–24 directs the protein to the mitochondrion; sequence MSFWKVATLWQMPLRPSILVQVRT. The segment at 29–48 is disordered; it reads AAGSRTSMKDSAGRRLGPKK. Over residues 35–48 the composition is skewed to basic and acidic residues; the sequence is SMKDSAGRRLGPKK.

The protein belongs to the bacterial ribosomal protein bL27 family.

The protein resides in the mitochondrion. Component of the large subunit of mitochondrial ribosome. The sequence is that of Large ribosomal subunit protein bL27m (MRPL2) from Eremothecium gossypii (strain ATCC 10895 / CBS 109.51 / FGSC 9923 / NRRL Y-1056) (Yeast).